Here is a 243-residue protein sequence, read N- to C-terminus: 1-(5-phosphoribosyl)-5-[(5-phosphoribosylamino)methylideneamino] imidazole-4-carboxamide isomerase (243 aa).

Catalysis depends on aspartate 8, which acts as the Proton acceptor. The active-site Proton donor is the aspartate 128.

It belongs to the HisA/HisF family.

It localises to the cytoplasm. It catalyses the reaction 1-(5-phospho-beta-D-ribosyl)-5-[(5-phospho-beta-D-ribosylamino)methylideneamino]imidazole-4-carboxamide = 5-[(5-phospho-1-deoxy-D-ribulos-1-ylimino)methylamino]-1-(5-phospho-beta-D-ribosyl)imidazole-4-carboxamide. It participates in amino-acid biosynthesis; L-histidine biosynthesis; L-histidine from 5-phospho-alpha-D-ribose 1-diphosphate: step 4/9. The polypeptide is 1-(5-phosphoribosyl)-5-[(5-phosphoribosylamino)methylideneamino] imidazole-4-carboxamide isomerase (Opitutus terrae (strain DSM 11246 / JCM 15787 / PB90-1)).